Here is a 662-residue protein sequence, read N- to C-terminus: Probable lysophospholipase 3 (662 aa).

Residues 1 to 19 (MLFNCFGILALLQILPALA) form the signal peptide. Residues asparagine 74, asparagine 127, asparagine 162, asparagine 196, asparagine 266, asparagine 274, asparagine 303, asparagine 376, asparagine 406, asparagine 411, asparagine 483, asparagine 518, asparagine 523, asparagine 547, asparagine 556, asparagine 574, asparagine 596, and asparagine 613 are each glycosylated (N-linked (GlcNAc...) asparagine). The PLA2c domain occupies 76–617 (TCPSDYMLRP…EQYCWNGTTV (542 aa)).

Belongs to the lysophospholipase family.

The protein localises to the secreted. It carries out the reaction a 1-acyl-sn-glycero-3-phosphocholine + H2O = sn-glycerol 3-phosphocholine + a fatty acid + H(+). Its function is as follows. Catalyzes the release of fatty acids from lysophospholipids. This is Probable lysophospholipase 3 (plb3) from Schizosaccharomyces pombe (strain 972 / ATCC 24843) (Fission yeast).